We begin with the raw amino-acid sequence, 370 residues long: 4-hydroxy-3-methylbut-2-en-1-yl diphosphate synthase (flavodoxin) (370 aa).

[4Fe-4S] cluster-binding residues include cysteine 265, cysteine 268, cysteine 300, and glutamate 307.

The protein belongs to the IspG family. [4Fe-4S] cluster is required as a cofactor.

The enzyme catalyses (2E)-4-hydroxy-3-methylbut-2-enyl diphosphate + oxidized [flavodoxin] + H2O + 2 H(+) = 2-C-methyl-D-erythritol 2,4-cyclic diphosphate + reduced [flavodoxin]. It functions in the pathway isoprenoid biosynthesis; isopentenyl diphosphate biosynthesis via DXP pathway; isopentenyl diphosphate from 1-deoxy-D-xylulose 5-phosphate: step 5/6. In terms of biological role, converts 2C-methyl-D-erythritol 2,4-cyclodiphosphate (ME-2,4cPP) into 1-hydroxy-2-methyl-2-(E)-butenyl 4-diphosphate. This is 4-hydroxy-3-methylbut-2-en-1-yl diphosphate synthase (flavodoxin) from Symbiobacterium thermophilum (strain DSM 24528 / JCM 14929 / IAM 14863 / T).